Reading from the N-terminus, the 231-residue chain is Phosphatidylserine decarboxylase proenzyme (231 aa).

Ser-188 (schiff-base intermediate with substrate; via pyruvic acid) is an active-site residue. The residue at position 188 (Ser-188) is a Pyruvic acid (Ser); by autocatalysis.

It belongs to the phosphatidylserine decarboxylase family. PSD-A subfamily. As to quaternary structure, heterodimer of a large membrane-associated beta subunit and a small pyruvoyl-containing alpha subunit. It depends on pyruvate as a cofactor. Is synthesized initially as an inactive proenzyme. Formation of the active enzyme involves a self-maturation process in which the active site pyruvoyl group is generated from an internal serine residue via an autocatalytic post-translational modification. Two non-identical subunits are generated from the proenzyme in this reaction, and the pyruvate is formed at the N-terminus of the alpha chain, which is derived from the carboxyl end of the proenzyme. The post-translation cleavage follows an unusual pathway, termed non-hydrolytic serinolysis, in which the side chain hydroxyl group of the serine supplies its oxygen atom to form the C-terminus of the beta chain, while the remainder of the serine residue undergoes an oxidative deamination to produce ammonia and the pyruvoyl prosthetic group on the alpha chain.

The protein localises to the cell membrane. It carries out the reaction a 1,2-diacyl-sn-glycero-3-phospho-L-serine + H(+) = a 1,2-diacyl-sn-glycero-3-phosphoethanolamine + CO2. It participates in phospholipid metabolism; phosphatidylethanolamine biosynthesis; phosphatidylethanolamine from CDP-diacylglycerol: step 2/2. Functionally, catalyzes the formation of phosphatidylethanolamine (PtdEtn) from phosphatidylserine (PtdSer). In Rickettsia akari (strain Hartford), this protein is Phosphatidylserine decarboxylase proenzyme.